A 487-amino-acid polypeptide reads, in one-letter code: N-succinylglutamate 5-semialdehyde dehydrogenase (487 aa).

221 to 226 contacts NAD(+); that stretch reads GSSDTG. Catalysis depends on residues Glu-244 and Cys-278.

The protein belongs to the aldehyde dehydrogenase family. AstD subfamily.

It carries out the reaction N-succinyl-L-glutamate 5-semialdehyde + NAD(+) + H2O = N-succinyl-L-glutamate + NADH + 2 H(+). It functions in the pathway amino-acid degradation; L-arginine degradation via AST pathway; L-glutamate and succinate from L-arginine: step 4/5. Catalyzes the NAD-dependent reduction of succinylglutamate semialdehyde into succinylglutamate. The chain is N-succinylglutamate 5-semialdehyde dehydrogenase from Burkholderia multivorans (strain ATCC 17616 / 249).